The primary structure comprises 1358 residues: DNA-directed RNA polymerase subunit beta (1358 aa).

It belongs to the RNA polymerase beta chain family. The RNAP catalytic core consists of 2 alpha, 1 beta, 1 beta' and 1 omega subunit. When a sigma factor is associated with the core the holoenzyme is formed, which can initiate transcription.

The catalysed reaction is RNA(n) + a ribonucleoside 5'-triphosphate = RNA(n+1) + diphosphate. DNA-dependent RNA polymerase catalyzes the transcription of DNA into RNA using the four ribonucleoside triphosphates as substrates. The chain is DNA-directed RNA polymerase subunit beta from Francisella tularensis subsp. tularensis (strain FSC 198).